Reading from the N-terminus, the 227-residue chain is Orotidine 5'-phosphate decarboxylase (227 aa).

Substrate-binding positions include Asp8, Lys30, 59 to 68, Thr118, Arg178, Gln187, Gly207, and Arg208; that span reads DLKLYDIPNT. The Proton donor role is filled by Lys61.

It belongs to the OMP decarboxylase family. Type 1 subfamily. In terms of assembly, homodimer.

It catalyses the reaction orotidine 5'-phosphate + H(+) = UMP + CO2. It functions in the pathway pyrimidine metabolism; UMP biosynthesis via de novo pathway; UMP from orotate: step 2/2. Its function is as follows. Catalyzes the decarboxylation of orotidine 5'-monophosphate (OMP) to uridine 5'-monophosphate (UMP). The chain is Orotidine 5'-phosphate decarboxylase from Sulfurimonas denitrificans (strain ATCC 33889 / DSM 1251) (Thiomicrospira denitrificans (strain ATCC 33889 / DSM 1251)).